The primary structure comprises 133 residues: Small ribosomal subunit protein uS11 (133 aa).

Positions 114–133 (VTPIPHDGTRPPGGKRGRRV) are disordered.

The protein belongs to the universal ribosomal protein uS11 family. In terms of assembly, part of the 30S ribosomal subunit.

Its function is as follows. Located on the platform of the 30S subunit. This Archaeoglobus fulgidus (strain ATCC 49558 / DSM 4304 / JCM 9628 / NBRC 100126 / VC-16) protein is Small ribosomal subunit protein uS11.